The sequence spans 314 residues: Deoxymugineic acid synthase 1-A (314 aa).

The interval 1 to 21 is disordered; that stretch reads MGAGDKTAAGMPRIGMGTAVQ. An NADP(+)-binding site is contributed by Asp44. The active-site Proton donor is the Tyr49. His112 lines the substrate pocket. Residues 158-159, Gln180, 258-266, and 273-281 contribute to the NADP(+) site; these read AN, FDEARMREN, and ELTEEEHRR.

The protein belongs to the aldo/keto reductase family. In terms of tissue distribution, mostly expressed in root tissues, observed in mesocotyl and embryonic roots, seedling roots, crown and seedling leafes, mature bracts, anthers, pistil, caryopsis and embryos.

It catalyses the reaction 2'-deoxymugineate + NAD(+) = 3''-deamino-3''-oxonicotianamine + NADH + H(+). It carries out the reaction 2'-deoxymugineate + NADP(+) = 3''-deamino-3''-oxonicotianamine + NADPH + H(+). The protein operates within siderophore biosynthesis. In terms of biological role, catalyzes the reduction of a 3''-keto intermediate during the biosynthesis of 2'-deoxymugineic acid (DMA) from L-Met. Involved in the formation of phytosiderophores (MAs) belonging to the mugineic acid family and required to acquire iron. The polypeptide is Deoxymugineic acid synthase 1-A (Triticum aestivum (Wheat)).